The primary structure comprises 274 residues: MREGDSNSKKSADVAVLSIILTGSTLTLIYTYKRYLTQFKRTNDIPRRIFRKHWLYGKVTSVGDGDNFHFFHMPGGIRGGWGWLRPVPQMIKNDSTAEKLVGDSRNMRFFNFNWITHGRSTKSKIQKAKSQFLKLNVPYKNRKNLPTIPIRLCGIDAPERAHFGNPAQPFGNEALIWLQNRILGKKVWVKPLSIDQYNRCVARVSYWDWFGGWKDLSLEMLKDGLAVVYEGKVNTEFDDREDKYRYYEFLARSRKKGLWIQNKFETPGEYKKRI.

The chain crosses the membrane as a helical span at residues 15-32 (AVLSIILTGSTLTLIYTY). The 209-residue stretch at 53-261 (HWLYGKVTSV…RSRKKGLWIQ (209 aa)) folds into the TNase-like domain. The active site involves R151. D156 serves as a coordination point for Ca(2+). Residues E159 and R199 contribute to the active site.

Belongs to the LCL3 family.

The protein resides in the mitochondrion. The protein localises to the membrane. The polypeptide is Probable endonuclease LCL3 (LCL3) (Saccharomyces cerevisiae (strain RM11-1a) (Baker's yeast)).